Consider the following 216-residue polypeptide: Ceramide-1-phosphate transfer protein (216 aa).

The an N-acylsphingoid base 1-phosphate site is built by Asp56, Lys60, Arg108, Arg112, and His152.

Belongs to the GLTP family.

It is found in the cytoplasm. The protein localises to the cytosol. Its subcellular location is the golgi apparatus. The protein resides in the trans-Golgi network membrane. It localises to the cell membrane. It is found in the endosome membrane. The protein localises to the nucleus outer membrane. It catalyses the reaction N-(hexadecanoyl)-sphing-4-enine-1-phosphate(in) = N-(hexadecanoyl)-sphing-4-enine-1-phosphate(out). The enzyme catalyses N-(9Z-octadecenoyl)-sphing-4-enine-1-phosphate(in) = N-(9Z-octadecenoyl)-sphing-4-enine-1-phosphate(out). Its function is as follows. Mediates the intracellular transfer of ceramide-1-phosphate (C1P) between organelle membranes and the cell membrane. Required for normal structure of the Golgi stacks. Can bind phosphoceramides with a variety of aliphatic chains, but has a preference for lipids with saturated C16:0 or monounsaturated C18:1 aliphatic chains, and is inefficient with phosphoceramides containing lignoceryl (C24:0). Plays a role in the regulation of the cellular levels of ceramide-1-phosphate, and thereby contributes to the regulation of phospholipase PLA2G4A activity and the release of arachidonic acid. Has no activity with galactosylceramide, lactosylceramide, sphingomyelin, phosphatidylcholine, phosphatidic acid and ceramide. C1P transfer is stimulated by phosphatidylserine in C1P source vesicles. Regulates autophagy, inflammasome mediated IL1B and IL18 processing, and pyroptosis, but not apoptosis. This is Ceramide-1-phosphate transfer protein (Cptp) from Rattus norvegicus (Rat).